The sequence spans 588 residues: Cation channel sperm-associated protein 2 (588 aa).

Residues 1–106 (MAQEQGHFQL…LWAGWVLDSS (106 aa)) are Cytoplasmic-facing. A helical transmembrane segment spans residues 107–129 (VFSKFIISLIFLNTFVLMVEIEL). The Extracellular segment spans residues 130 to 138 (MESTNTALW). A helical transmembrane segment spans residues 139 to 164 (PVKLALEVADWFILLSFIVEILLMWL). Residues 165-173 (ASFSLFWKD) are Cytoplasmic-facing. The helical transmembrane segment at 174–198 (AWNVFDFFVTLLSLLPELVVLLGVP) threads the bilayer. At 199 to 201 (AHS) the chain is on the extracellular side. A helical membrane pass occupies residues 202 to 220 (VWLQLLRVCRVLRSLKLFA). Over 221-237 (RFRQIKVILLALVRALK) the chain is Cytoplasmic. Residues 238–260 (SMTFLLMLLLIFFYIFAVTGVYF) form a helical membrane-spanning segment. The Extracellular segment spans residues 261-279 (FREYSRSTIEGLEYNMFFS). Residues 280-292 (DLLNSLVTVFILF) constitute an intramembrane region (helical; Pore-forming). Over 293 to 312 (TLDHWYAVLQDIWKVPESSR) the chain is Extracellular. A helical membrane pass occupies residues 313 to 339 (VFSSIYVILWLLLGSIIFRNIIVAMMV). At 340–588 (TNFQNIRSEL…VQALMSFEDK (249 aa)) the chain is on the cytoplasmic side. A disordered region spans residues 376–512 (SESLRGTSLG…YPVSHSISSH (137 aa)). Over residues 390–439 (DIIETSDASDDDDDDDDDDDDDDDDDDDKSDATESDNEESDSENSESENS) the composition is skewed to acidic residues. Residues 440–502 (ESEKIDPEKD…KVKEESKEKA (63 aa)) are compositionally biased toward basic and acidic residues.

Belongs to the cation channel sperm-associated (TC 1.A.1.19) family. As to quaternary structure, component of the CatSper complex or CatSpermasome composed of the core pore-forming members CATSPER1, CATSPER2, CATSPER3 and CATSPER4 as well as auxiliary members CATSPERB, CATSPERG2, CATSPERD, CATSPERE, CATSPERZ, C2CD6/CATSPERT, SLCO6C1, TMEM249, TMEM262 and EFCAB9. HSPA1 may be an additional auxiliary complex member. The core complex members CATSPER1, CATSPER2, CATSPER3 and CATSPER4 form a heterotetrameric channel. The auxiliary CATSPERB, CATSPERG2, CATSPERD and CATSPERE subunits form a pavilion-like structure over the pore which stabilizes the complex through interactions with CATSPER4, CATSPER3, CATSPER1 and CATSPER2 respectively. SLCO6C1 interacts with CATSPERE and TMEM262/CATSPERH interacts with CATSPERB, further stabilizing the complex. C2CD6/CATSPERT interacts at least with CATSPERD and is required for targeting the CatSper complex in the flagellar membrane. Interacts with Ca(v)3.3/CACNA1I, leading to suppression of T-type calcium channel activity. Testis-specific.

Its subcellular location is the cell projection. It is found in the cilium. It localises to the flagellum membrane. It catalyses the reaction Ca(2+)(in) = Ca(2+)(out). Its activity is regulated as follows. In contrast to the human ortholog, not activated by progesterone. Activated by intracellular alkalinization. Its function is as follows. Pore-forming subunit of the CatSper complex, a sperm-specific voltage-gated calcium channel that plays a central role in sperm cell hyperactivation. Controls calcium entry to mediate the hyperactivated motility, a step needed for sperm motility which is essential late in the preparation of sperm for fertilization. This Mus musculus (Mouse) protein is Cation channel sperm-associated protein 2 (Catsper2).